A 363-amino-acid polypeptide reads, in one-letter code: Aminomethyltransferase (363 aa).

Belongs to the GcvT family. As to quaternary structure, the glycine cleavage system is composed of four proteins: P, T, L and H.

It catalyses the reaction N(6)-[(R)-S(8)-aminomethyldihydrolipoyl]-L-lysyl-[protein] + (6S)-5,6,7,8-tetrahydrofolate = N(6)-[(R)-dihydrolipoyl]-L-lysyl-[protein] + (6R)-5,10-methylene-5,6,7,8-tetrahydrofolate + NH4(+). Functionally, the glycine cleavage system catalyzes the degradation of glycine. The polypeptide is Aminomethyltransferase (Prosthecochloris aestuarii (strain DSM 271 / SK 413)).